A 225-amino-acid polypeptide reads, in one-letter code: MTSAKNVIVDTGCANLSSVKFAVERLGFEVTITDDITIIQQAEKVIFPGVGSAKHAMKNIKAKNLEAALQGLTQPVLGFCLGMQLMTESSTEGKKSSTEGNNDDNTSHIVPCLNLIPTNVEPLKAQGNRLPHMGWNTLTQVSNHPIFKGISEGDYFYFVHSFAAPISEYTIASCEYGSTFSAAIAKDNFIGCQFHPERSSALGSKIIQNFLELDSTELNQELVNL.

The region spanning 5 to 220 is the Glutamine amidotransferase type-1 domain; sequence KNVIVDTGCA…LELDSTELNQ (216 aa). Residue cysteine 80 is the Nucleophile of the active site. Catalysis depends on residues histidine 195 and glutamate 197.

As to quaternary structure, heterodimer of HisH and HisF.

The protein resides in the cytoplasm. It catalyses the reaction 5-[(5-phospho-1-deoxy-D-ribulos-1-ylimino)methylamino]-1-(5-phospho-beta-D-ribosyl)imidazole-4-carboxamide + L-glutamine = D-erythro-1-(imidazol-4-yl)glycerol 3-phosphate + 5-amino-1-(5-phospho-beta-D-ribosyl)imidazole-4-carboxamide + L-glutamate + H(+). The enzyme catalyses L-glutamine + H2O = L-glutamate + NH4(+). It functions in the pathway amino-acid biosynthesis; L-histidine biosynthesis; L-histidine from 5-phospho-alpha-D-ribose 1-diphosphate: step 5/9. Functionally, IGPS catalyzes the conversion of PRFAR and glutamine to IGP, AICAR and glutamate. The HisH subunit catalyzes the hydrolysis of glutamine to glutamate and ammonia as part of the synthesis of IGP and AICAR. The resulting ammonia molecule is channeled to the active site of HisF. The chain is Imidazole glycerol phosphate synthase subunit HisH from Colwellia psychrerythraea (strain 34H / ATCC BAA-681) (Vibrio psychroerythus).